The chain runs to 351 residues: MGFDLDVEKKKENRNIPQANNLKIKVIGVGGAGNNAINRMIEIGIHGVEFVAVNTDLQVLEASNADVKIQIGENITRGLGAGGRPEIGEQAALESEEKIREVLQDTHMVFITAGFGGGTGTGASPVIAKIAKEMGILTVAIVTTPFYFEGPERLKKAIEGLKKLRKHVDTLIKISNNKLMEELPRDVKIKDAFLKADETLHQGVKGISELITKRGYINLDFADIESVMKDAGAAILGIGVGKGEHRAREAAKKAMESKLIEHPVENASSIVFNITAPSNIRMEEVHEAAMIIRQNSSEDADVKFGLIFDDEVPDDEIRVIFIATRFPDEDKILFPEGDIPAIYRYGLEGLL.

GTP is bound by residues 31 to 35, 118 to 120, Glu-149, Arg-153, and Asp-197; these read GAGNN and GTG.

The protein belongs to the FtsZ family. In terms of assembly, homodimer. Polymerizes to form a dynamic ring structure in a strictly GTP-dependent manner. Interacts directly with several other division proteins. Interacts with FtsA.

The protein localises to the cytoplasm. Essential cell division protein that forms a contractile ring structure (Z ring) at the future cell division site. The regulation of the ring assembly controls the timing and the location of cell division. One of the functions of the FtsZ ring is to recruit other cell division proteins to the septum to produce a new cell wall between the dividing cells. Binds GTP and shows GTPase activity. The polypeptide is Cell division protein FtsZ (Thermotoga maritima (strain ATCC 43589 / DSM 3109 / JCM 10099 / NBRC 100826 / MSB8)).